The primary structure comprises 165 residues: Putative universal stress protein SH1215 (165 aa).

It belongs to the universal stress protein A family.

Its subcellular location is the cytoplasm. In Staphylococcus haemolyticus (strain JCSC1435), this protein is Putative universal stress protein SH1215.